The sequence spans 2635 residues: Large tegument protein deneddylase (2635 aa).

The interval 1-233 (MAAQPLYMEG…LHGPRMDISR (233 aa)) is deubiquitination activity. Residues 9–223 (EGMASTHQAN…NHYRTIVFEE (215 aa)) form the Peptidase C76 domain. Active-site residues include C29, D159, and H161. Disordered stretches follow at residues 243–497 (ITSP…DRYA), 2238–2269 (PLTITPNKPTGTPHVSPEADPITERKRGQQPK), 2357–2438 (RTAL…KRAA), and 2500–2533 (KAGWDTAPDIPLPHSSPESSPPTSPQPIRVDDKS). Low complexity predominate over residues 245-255 (SPSVSPAPSEA). Basic and acidic residues-rich tracts occupy residues 256-270 (PLRRDSTQSQDETRP) and 282-295 (PTDRPRPPHQDRPP). Positions 316–325 (KTGRGGNEGR) are interaction with inner tegument protein. Residues 330–346 (PPDEHQPPHITAEHMDQ) show a composition bias toward basic and acidic residues. A compositionally biased stretch (low complexity) spans 448-461 (DDPLTPLYPLTDTP). Positions 2379–2402 (TLTFRLPPTAPTPATAALETKTTP) are enriched in low complexity. Positions 2425–2437 (HARDTSPPAEKRA) are enriched in basic and acidic residues.

The protein belongs to the herpesviridae large tegument protein family. In terms of assembly, interacts with host CUL1 and CUL4A; these interactions inhibit the E3 ligase activity of cullins. Interacts with inner tegument protein. Interacts with capsid vertex specific component CVC2. Interacts with the major capsid protein/MCP.

Its subcellular location is the virion tegument. The protein localises to the host cytoplasm. It localises to the host nucleus. The catalysed reaction is Thiol-dependent hydrolysis of ester, thioester, amide, peptide and isopeptide bonds formed by the C-terminal Gly of ubiquitin (a 76-residue protein attached to proteins as an intracellular targeting signal).. Large tegument protein that plays multiple roles in the viral cycle. During viral entry, remains associated with the capsid while most of the tegument is detached and participates in the capsid transport toward the host nucleus. Plays a role in the routing of the capsid at the nuclear pore complex and subsequent uncoating. Within the host nucleus, acts as a deneddylase and promotes the degradation of nuclear CRLs (cullin-RING ubiquitin ligases) and thereby stabilizes nuclear CRL substrates, while cytoplasmic CRLs remain unaffected. These modifications prevent host cell cycle S-phase progression and create a favorable environment allowing efficient viral genome replication. Participates later in the secondary envelopment of capsids. Indeed, plays a linker role for the association of the outer viral tegument to the capsids together with the inner tegument protein. In Homo sapiens (Human), this protein is Large tegument protein deneddylase.